The chain runs to 89 residues: Small ribosomal subunit protein uS15 (89 aa).

This sequence belongs to the universal ribosomal protein uS15 family. As to quaternary structure, part of the 30S ribosomal subunit. Forms a bridge to the 50S subunit in the 70S ribosome, contacting the 23S rRNA.

Its function is as follows. One of the primary rRNA binding proteins, it binds directly to 16S rRNA where it helps nucleate assembly of the platform of the 30S subunit by binding and bridging several RNA helices of the 16S rRNA. Functionally, forms an intersubunit bridge (bridge B4) with the 23S rRNA of the 50S subunit in the ribosome. The sequence is that of Small ribosomal subunit protein uS15 from Protochlamydia amoebophila (strain UWE25).